The chain runs to 380 residues: Lipid-A-disaccharide synthase (380 aa).

Belongs to the LpxB family.

The catalysed reaction is a lipid X + a UDP-2-N,3-O-bis[(3R)-3-hydroxyacyl]-alpha-D-glucosamine = a lipid A disaccharide + UDP + H(+). It participates in bacterial outer membrane biogenesis; LPS lipid A biosynthesis. Functionally, condensation of UDP-2,3-diacylglucosamine and 2,3-diacylglucosamine-1-phosphate to form lipid A disaccharide, a precursor of lipid A, a phosphorylated glycolipid that anchors the lipopolysaccharide to the outer membrane of the cell. This Photobacterium profundum (strain SS9) protein is Lipid-A-disaccharide synthase.